Reading from the N-terminus, the 368-residue chain is Isopentenyl-diphosphate delta-isomerase (368 aa).

7–8 (RK) serves as a coordination point for substrate. Residues T65, 66 to 68 (GMT), S96, and N125 each bind FMN. 96-98 (SQR) contributes to the substrate binding site. Q160 contacts substrate. A Mg(2+)-binding site is contributed by E161. Residues K193, S218, T223, 275–277 (GIR), and 296–297 (AL) each bind FMN.

It belongs to the IPP isomerase type 2 family. As to quaternary structure, homooctamer. Dimer of tetramers. The cofactor is FMN. NADPH is required as a cofactor. Requires Mg(2+) as cofactor.

The protein localises to the cytoplasm. The catalysed reaction is isopentenyl diphosphate = dimethylallyl diphosphate. Its function is as follows. Involved in the biosynthesis of isoprenoids. Catalyzes the 1,3-allylic rearrangement of the homoallylic substrate isopentenyl (IPP) to its allylic isomer, dimethylallyl diphosphate (DMAPP). In Saccharolobus solfataricus (strain ATCC 35092 / DSM 1617 / JCM 11322 / P2) (Sulfolobus solfataricus), this protein is Isopentenyl-diphosphate delta-isomerase.